Consider the following 598-residue polypeptide: UvrABC system protein C (598 aa).

The GIY-YIG domain maps to Asp-14–Ile-91. The UVR domain maps to Asp-196–Met-231.

The protein belongs to the UvrC family. In terms of assembly, interacts with UvrB in an incision complex.

It localises to the cytoplasm. Its function is as follows. The UvrABC repair system catalyzes the recognition and processing of DNA lesions. UvrC both incises the 5' and 3' sides of the lesion. The N-terminal half is responsible for the 3' incision and the C-terminal half is responsible for the 5' incision. This chain is UvrABC system protein C, found in Streptococcus pyogenes serotype M5 (strain Manfredo).